A 421-amino-acid polypeptide reads, in one-letter code: Gamma-glutamyl phosphate reductase (421 aa).

It belongs to the gamma-glutamyl phosphate reductase family.

Its subcellular location is the cytoplasm. It carries out the reaction L-glutamate 5-semialdehyde + phosphate + NADP(+) = L-glutamyl 5-phosphate + NADPH + H(+). It participates in amino-acid biosynthesis; L-proline biosynthesis; L-glutamate 5-semialdehyde from L-glutamate: step 2/2. Its function is as follows. Catalyzes the NADPH-dependent reduction of L-glutamate 5-phosphate into L-glutamate 5-semialdehyde and phosphate. The product spontaneously undergoes cyclization to form 1-pyrroline-5-carboxylate. The polypeptide is Gamma-glutamyl phosphate reductase (Pseudomonas savastanoi pv. phaseolicola (strain 1448A / Race 6) (Pseudomonas syringae pv. phaseolicola (strain 1448A / Race 6))).